A 261-amino-acid polypeptide reads, in one-letter code: tRNA pseudouridine synthase A (261 aa).

The Nucleophile role is filled by Asp-51. Tyr-109 serves as a coordination point for substrate.

The protein belongs to the tRNA pseudouridine synthase TruA family. In terms of assembly, homodimer.

The catalysed reaction is uridine(38/39/40) in tRNA = pseudouridine(38/39/40) in tRNA. Formation of pseudouridine at positions 38, 39 and 40 in the anticodon stem and loop of transfer RNAs. In Shewanella baltica (strain OS195), this protein is tRNA pseudouridine synthase A.